The chain runs to 196 residues: Nitrogen regulatory protein P-II homolog (196 aa).

Residues 1 to 61 (MAASMTKPIS…NNSRVLPVVS (61 aa)) constitute a chloroplast transit peptide. ATP-binding positions include 108 to 112 (GFGAQ) and 161 to 164 (GDGK). A Mg(2+)-binding site is contributed by G110.

It belongs to the P(II) protein family. In terms of assembly, homodimer. Interacts with NAGK. Interaction with NAGK is dependent of MgATP and inhibited by 2-oxoglutarate, arginine, glutamate, citrate, and oxaloacetate.

Its subcellular location is the plastid. It is found in the chloroplast. Participates in sensing carbon and organic nitrogen status and regulates some steps of primary carbon and nitrogen metabolism. Required for nitrite uptake in chloroplasts and regulates arginine biosynthesis through interaction with acetylglutamate kinase (NAGK) in chloroplasts. Regulates fatty acids synthesis in chloroplasts by interacting with the acetyl-CoA carboxylase complex and inhibiting acetyl-CoA carboxylase (ACCase) activity. The sequence is that of Nitrogen regulatory protein P-II homolog (GLB1) from Arabidopsis thaliana (Mouse-ear cress).